The following is a 149-amino-acid chain: Transcriptional repressor NrdR (149 aa).

The segment at 3 to 33 (CPFCSSEDTKVVDSRTTIDGSTKRRRECNNC) is a zinc-finger region. The ATP-cone domain occupies 48-138 (IYVVKKDNRR…VYKEFDDIKS (91 aa)).

This sequence belongs to the NrdR family. Requires Zn(2+) as cofactor.

Negatively regulates transcription of bacterial ribonucleotide reductase nrd genes and operons by binding to NrdR-boxes. The sequence is that of Transcriptional repressor NrdR from Fusobacterium nucleatum subsp. nucleatum (strain ATCC 25586 / DSM 15643 / BCRC 10681 / CIP 101130 / JCM 8532 / KCTC 2640 / LMG 13131 / VPI 4355).